The following is a 393-amino-acid chain: Pectate lyase A (393 aa).

Positions 1–32 (MMNKASGRSFTRSSKYLLATLIAGMMASGVSA) are cleaved as a signal peptide. Residues glutamate 174, aspartate 176, aspartate 216, and aspartate 220 each contribute to the Ca(2+) site. Arginine 273 is an active-site residue. A disulfide bond links cysteine 330 and cysteine 358.

It belongs to the polysaccharide lyase 1 family. PLADES subfamily. The cofactor is Ca(2+).

It is found in the secreted. It carries out the reaction Eliminative cleavage of (1-&gt;4)-alpha-D-galacturonan to give oligosaccharides with 4-deoxy-alpha-D-galact-4-enuronosyl groups at their non-reducing ends.. It functions in the pathway glycan metabolism; pectin degradation; 2-dehydro-3-deoxy-D-gluconate from pectin: step 2/5. Involved in maceration and soft-rotting of plant tissue. This chain is Pectate lyase A (pelA), found in Dickeya chrysanthemi (Pectobacterium chrysanthemi).